The following is a 484-amino-acid chain: Cathepsin F (484 aa).

An N-terminal signal peptide occupies residues 1–19 (MAPWLQLLSLLGLLPGAVA). Residues 20–270 (APAQPRAASF…MKQAKSVGDL (251 aa)) constitute a propeptide, activation peptide. Residues N160 and N195 are each glycosylated (N-linked (GlcNAc...) asparagine). Cystine bridges form between C292-C333 and C326-C366. Residue C295 is part of the active site. 2 N-linked (GlcNAc...) asparagine glycosylation sites follow: N367 and N378. A disulfide bridge connects residues C424 and C472. H431 is a catalytic residue. N440 carries an N-linked (GlcNAc...) asparagine glycan. Residue N451 is part of the active site.

The protein belongs to the peptidase C1 family. In terms of tissue distribution, high expression levels in heart, skeletal muscle, brain, testis and ovary; moderate levels in prostate, placenta, liver and colon; and no detectable expression in peripheral leukocytes and thymus.

It localises to the lysosome. The catalysed reaction is The recombinant enzyme cleaves synthetic substrates with Phe and Leu (better than Val) in P2, with high specificity constant (kcat/Km) comparable to that of cathepsin L.. In terms of biological role, thiol protease which is believed to participate in intracellular degradation and turnover of proteins. Has also been implicated in tumor invasion and metastasis. The polypeptide is Cathepsin F (CTSF) (Homo sapiens (Human)).